The chain runs to 213 residues: uncharacterized protein (213 aa).

Coiled-coil stretches lie at residues 54–78 (KEQTKLNNLIEKGKQMLKEYNNLKL) and 108–151 (VKDV…STSK). Residues 122–142 (IEKEKEEEKAAKKAEKAEEKK) show a composition bias toward basic and acidic residues. Positions 122–213 (IEKEKEEEKA…FGGKPTGQIW (92 aa)) are disordered. Over residues 146–188 (KNSTSKSGSKSSKSSSGSSKSSSKSSKSSKSSSGSSKSSSKSS) the composition is skewed to low complexity. Basic residues predominate over residues 189-199 (KNSKKSSKKSN).

It belongs to the mimivirus R546 family.

This is an uncharacterized protein from Acanthamoeba polyphaga (Amoeba).